Reading from the N-terminus, the 116-residue chain is Putative iron-sulfur cluster insertion protein ErpA (116 aa).

3 residues coordinate iron-sulfur cluster: Cys44, Cys108, and Cys110.

It belongs to the HesB/IscA family. Homodimer. The cofactor is iron-sulfur cluster.

Required for insertion of 4Fe-4S clusters. This is Putative iron-sulfur cluster insertion protein ErpA from Thiobacillus denitrificans (strain ATCC 25259 / T1).